The chain runs to 158 residues: MTIFEGSFTNASTLKVGIVIARFNDLITNKILSGCLDCLKKHGLDTSELSNQVDIVWVPGSFELPIAAKTLMKKKSYDVVIALGAVIRGETSHYDVVISEASKGISQVSNENNVPIIFGVLTTDTLQQALERAGIKNNLGWNYALQAIEMGSLIKNLN.

5-amino-6-(D-ribitylamino)uracil is bound by residues Phe23, 61–63 (SFE), and 85–87 (AVI). 90 to 91 (ET) lines the (2S)-2-hydroxy-3-oxobutyl phosphate pocket. Catalysis depends on His93, which acts as the Proton donor. Phe118 is a 5-amino-6-(D-ribitylamino)uracil binding site. Arg132 is a (2S)-2-hydroxy-3-oxobutyl phosphate binding site.

The protein belongs to the DMRL synthase family.

It carries out the reaction (2S)-2-hydroxy-3-oxobutyl phosphate + 5-amino-6-(D-ribitylamino)uracil = 6,7-dimethyl-8-(1-D-ribityl)lumazine + phosphate + 2 H2O + H(+). It functions in the pathway cofactor biosynthesis; riboflavin biosynthesis; riboflavin from 2-hydroxy-3-oxobutyl phosphate and 5-amino-6-(D-ribitylamino)uracil: step 1/2. Its function is as follows. Catalyzes the formation of 6,7-dimethyl-8-ribityllumazine by condensation of 5-amino-6-(D-ribitylamino)uracil with 3,4-dihydroxy-2-butanone 4-phosphate. This is the penultimate step in the biosynthesis of riboflavin. The sequence is that of 6,7-dimethyl-8-ribityllumazine synthase from Prochlorococcus marinus (strain MIT 9215).